Here is a 426-residue protein sequence, read N- to C-terminus: Tryptophan synthase beta chain (426 aa).

Lysine 108 carries the post-translational modification N6-(pyridoxal phosphate)lysine.

It belongs to the TrpB family. Tetramer of two alpha and two beta chains. Requires pyridoxal 5'-phosphate as cofactor.

The enzyme catalyses (1S,2R)-1-C-(indol-3-yl)glycerol 3-phosphate + L-serine = D-glyceraldehyde 3-phosphate + L-tryptophan + H2O. It participates in amino-acid biosynthesis; L-tryptophan biosynthesis; L-tryptophan from chorismate: step 5/5. In terms of biological role, the beta subunit is responsible for the synthesis of L-tryptophan from indole and L-serine. The chain is Tryptophan synthase beta chain (trpB) from Thermoplasma volcanium (strain ATCC 51530 / DSM 4299 / JCM 9571 / NBRC 15438 / GSS1).